We begin with the raw amino-acid sequence, 360 residues long: Phospho-N-acetylmuramoyl-pentapeptide-transferase (360 aa).

The next 10 helical transmembrane spans lie at 21–41 (YITFRSIMALLTALIIGLWIG), 73–93 (TMGGIMILFAIGVSTLLWADL), 98–118 (VWFVLFILFGYGVVGFVDDYW), 132–152 (WKYFWLSVIALVSAFGMYAIG), 168–188 (VMPQLGLFYIVLTYFVIVGTS), 199–219 (GLAIVPLIMVAGAFALIAWAT), 236–256 (SGELVILCTAIVGAGLGFLWF), 263–283 (VFMGDVGSLSLGGALGVIAVL), 288–308 (LLLVVMGGVFVVEALSVILQV), and 338–358 (VIVRFWIITLMLVLIGLVTLK).

This sequence belongs to the glycosyltransferase 4 family. MraY subfamily. The cofactor is Mg(2+).

The protein localises to the cell inner membrane. It catalyses the reaction UDP-N-acetyl-alpha-D-muramoyl-L-alanyl-gamma-D-glutamyl-meso-2,6-diaminopimeloyl-D-alanyl-D-alanine + di-trans,octa-cis-undecaprenyl phosphate = di-trans,octa-cis-undecaprenyl diphospho-N-acetyl-alpha-D-muramoyl-L-alanyl-D-glutamyl-meso-2,6-diaminopimeloyl-D-alanyl-D-alanine + UMP. It participates in cell wall biogenesis; peptidoglycan biosynthesis. In terms of biological role, catalyzes the initial step of the lipid cycle reactions in the biosynthesis of the cell wall peptidoglycan: transfers peptidoglycan precursor phospho-MurNAc-pentapeptide from UDP-MurNAc-pentapeptide onto the lipid carrier undecaprenyl phosphate, yielding undecaprenyl-pyrophosphoryl-MurNAc-pentapeptide, known as lipid I. The protein is Phospho-N-acetylmuramoyl-pentapeptide-transferase of Glaesserella parasuis serovar 5 (strain SH0165) (Haemophilus parasuis).